The chain runs to 473 residues: Photosystem II CP43 reaction center protein (473 aa).

Residues 1–14 (MKNLYSLRRFYHVE) constitute a propeptide that is removed on maturation. At threonine 15 the chain carries N-acetylthreonine. A Phosphothreonine modification is found at threonine 15. A run of 5 helical transmembrane segments spans residues 69-93 (LFEV…PHLA), 134-155 (LIGP…KDKN), 178-200 (KARY…RVIT), 255-275 (KPFG…LSYS), and 291-312 (WFNN…ASQA). Position 367 (glutamate 367) interacts with [CaMn4O5] cluster. A helical membrane pass occupies residues 447 to 471 (RARAAAAGFEKGIDRDTEPTLFMRP).

It belongs to the PsbB/PsbC family. PsbC subfamily. As to quaternary structure, PSII is composed of 1 copy each of membrane proteins PsbA, PsbB, PsbC, PsbD, PsbE, PsbF, PsbH, PsbI, PsbJ, PsbK, PsbL, PsbM, PsbT, PsbX, PsbY, PsbZ, Psb30/Ycf12, at least 3 peripheral proteins of the oxygen-evolving complex and a large number of cofactors. It forms dimeric complexes. It depends on Binds multiple chlorophylls and provides some of the ligands for the Ca-4Mn-5O cluster of the oxygen-evolving complex. It may also provide a ligand for a Cl- that is required for oxygen evolution. PSII binds additional chlorophylls, carotenoids and specific lipids. as a cofactor.

The protein localises to the plastid. Its subcellular location is the chloroplast thylakoid membrane. Its function is as follows. One of the components of the core complex of photosystem II (PSII). It binds chlorophyll and helps catalyze the primary light-induced photochemical processes of PSII. PSII is a light-driven water:plastoquinone oxidoreductase, using light energy to abstract electrons from H(2)O, generating O(2) and a proton gradient subsequently used for ATP formation. The sequence is that of Photosystem II CP43 reaction center protein from Nephroselmis olivacea (Green alga).